The following is a 49-amino-acid chain: Large ribosomal subunit protein bL33 (49 aa).

The protein belongs to the bacterial ribosomal protein bL33 family.

This chain is Large ribosomal subunit protein bL33, found in Lachnoclostridium phytofermentans (strain ATCC 700394 / DSM 18823 / ISDg) (Clostridium phytofermentans).